Consider the following 619-residue polypeptide: Long-chain fatty acid transport protein 6 (619 aa).

The next 2 helical transmembrane spans lie at 22-42 (LLFPYFWDDFWFVLKVVLIII) and 119-139 (VHVWFGLAKLGCVVAFLNTNI). 221–232 (YIFTSGTTGLPK) provides a ligand contact to AMP.

The protein belongs to the ATP-dependent AMP-binding enzyme family. In terms of tissue distribution, strongly expressed in heart and localizes to cardiac myocytes. Expressed at moderate levels in placenta, testis, and adrenal glands. Expressed at very low levels in kidney, bladder and uterus.

The protein localises to the cell membrane. It localises to the sarcolemma. The catalysed reaction is a fatty acid(in) = a fatty acid(out). It catalyses the reaction hexadecanoate(out) = hexadecanoate(in). It carries out the reaction (9Z)-octadecenoate(out) = (9Z)-octadecenoate(in). The enzyme catalyses (9Z,12Z)-octadecadienoate(out) = (9Z,12Z)-octadecadienoate(in). The catalysed reaction is a very long-chain fatty acid + ATP + CoA = a very long-chain fatty acyl-CoA + AMP + diphosphate. It catalyses the reaction tetracosanoate + ATP + CoA = tetracosanoyl-CoA + AMP + diphosphate. It carries out the reaction a long-chain fatty acid + ATP + CoA = a long-chain fatty acyl-CoA + AMP + diphosphate. The enzyme catalyses (5Z,8Z,11Z,14Z)-eicosatetraenoate + ATP + CoA = (5Z,8Z,11Z,14Z)-eicosatetraenoyl-CoA + AMP + diphosphate. The catalysed reaction is (9Z)-octadecenoate + ATP + CoA = (9Z)-octadecenoyl-CoA + AMP + diphosphate. Mediates the import of long-chain fatty acids (LCFA) into the cell by facilitating their transport at the plasma membrane. Also functions as an acyl-CoA ligase catalyzing the ATP-dependent formation of fatty acyl-CoA using LCFA and very-long-chain fatty acids (VLCFA) as substrates. Plays a pivotal role in regulating available LCFA substrates from exogenous sources in tissues undergoing high levels of beta-oxidation such as the heart. This Homo sapiens (Human) protein is Long-chain fatty acid transport protein 6 (SLC27A6).